A 439-amino-acid polypeptide reads, in one-letter code: Probable guanine deaminase (439 aa).

Positions 76 and 78 each coordinate Zn(2+). Residues 78 to 81, 203 to 204, 231 to 234, and aspartate 321 contribute to the substrate site; these read HYPQ, RF, and HINE. Residues histidine 231 and aspartate 321 each contribute to the Zn(2+) site.

The protein belongs to the metallo-dependent hydrolases superfamily. ATZ/TRZ family. It depends on Zn(2+) as a cofactor.

The catalysed reaction is guanine + H2O + H(+) = xanthine + NH4(+). It functions in the pathway purine metabolism; guanine degradation; xanthine from guanine: step 1/1. Its function is as follows. Catalyzes the hydrolytic deamination of guanine, producing xanthine and ammonia. This Deinococcus radiodurans (strain ATCC 13939 / DSM 20539 / JCM 16871 / CCUG 27074 / LMG 4051 / NBRC 15346 / NCIMB 9279 / VKM B-1422 / R1) protein is Probable guanine deaminase (guaD).